Reading from the N-terminus, the 838-residue chain is Glycogen phosphorylase, brain form (838 aa).

N-acetylalanine is present on Ala-2. Ser-15 is modified (phosphoserine). AMP-binding residues include Asp-43, Tyr-197, and Arg-310. A Phosphotyrosine modification is found at Tyr-197. Tyr-473 carries the post-translational modification Phosphotyrosine. Residue Ser-524 is modified to Phosphoserine. Lys-569 lines the pyridoxal 5'-phosphate pocket. Residues 677 to 678 are pyridoxal 5'-phosphate; the sequence is TG. N6-(pyridoxal phosphate)lysine is present on Lys-681.

Belongs to the glycogen phosphorylase family. As to quaternary structure, homodimer. Dimers associate into a tetramer to form the enzymatically active phosphorylase A. Pyridoxal 5'-phosphate is required as a cofactor. In terms of processing, phosphorylation of Ser-15 converts phosphorylase B (unphosphorylated) to phosphorylase A.

It catalyses the reaction [(1-&gt;4)-alpha-D-glucosyl](n) + phosphate = [(1-&gt;4)-alpha-D-glucosyl](n-1) + alpha-D-glucose 1-phosphate. Its activity is regulated as follows. Activity of phosphorylase is controlled both by allosteric means (through the non-covalent binding of metabolites) and by covalent modification. Thus AMP allosterically activates, whereas ATP, ADP, and glucose-6-phosphate allosterically inhibit, phosphorylase B. Its function is as follows. Glycogen phosphorylase that regulates glycogen mobilization. Phosphorylase is an important allosteric enzyme in carbohydrate metabolism. Enzymes from different sources differ in their regulatory mechanisms and in their natural substrates. However, all known phosphorylases share catalytic and structural properties. The polypeptide is Glycogen phosphorylase, brain form (Pygb) (Rattus norvegicus (Rat)).